The sequence spans 331 residues: Germ cell-specific gene 1-like protein (331 aa).

Over 1–8 (MKTSRRGR) the chain is Cytoplasmic. Residues 9 to 29 (ALLAVALNLLALLFATTAFLT) form a helical membrane-spanning segment. The Extracellular portion of the chain corresponds to 30–132 (THWCQGTQRV…FIDLAPASEK (103 aa)). A helical transmembrane segment spans residues 133–153 (GVLWLSVVSEVLYILLLVVGF). Residues 154–173 (SLMCLELFHSSNVIDGLKLN) lie on the Cytoplasmic side of the membrane. Residues 174 to 194 (AFAAVFTVLSGLLGMVAHMMY) form a helical membrane-spanning segment. Topologically, residues 195-217 (TQVFQVTVSLGPEDWRPHSWDYG) are extracellular. A helical transmembrane segment spans residues 218–238 (WSFCLAWGSFTCCMAASVTTL). Residues 239 to 331 (NSYTKTVIEF…RQCWVLGHWV (93 aa)) lie on the Cytoplasmic side of the membrane.

This sequence belongs to the GSG1 family. Component of the inner core of AMPAR complex. AMPAR complex consists of an inner core made of 4 pore-forming GluA/GRIA proteins (GRIA1, GRIA2, GRIA3 and GRIA4) and 4 major auxiliary subunits arranged in a twofold symmetry. One of the two pairs of distinct binding sites is occupied either by CNIH2, CNIH3 or CACNG2, CACNG3. The other harbors CACNG2, CACNG3, CACNG4, CACNG8 or GSG1L. This inner core of AMPAR complex is complemented by outer core constituents binding directly to the GluA/GRIA proteins at sites distinct from the interaction sites of the inner core constituents. Outer core constituents include at least PRRT1, PRRT2, CKAMP44/SHISA9, FRRS1L and NRN1. The proteins of the inner and outer core serve as a platform for other, more peripherally associated AMPAR constituents. Alone or in combination, these auxiliary subunits control the gating and pharmacology of the AMPAR complex and profoundly impact their biogenesis and protein processing.

Its subcellular location is the cell membrane. It is found in the synapse. In terms of biological role, as a component of the inner core of AMPAR complex, modifies AMPA receptor (AMPAR) gating. This Homo sapiens (Human) protein is Germ cell-specific gene 1-like protein (GSG1L).